The sequence spans 397 residues: NADH-quinone oxidoreductase subunit H (397 aa).

The next 9 helical transmembrane spans lie at 7 to 27 (ALLI…TAFA), 78 to 98 (LVYT…FGGI), 120 to 140 (ILAL…GGWA), 164 to 184 (MGLS…LDIV), 195 to 215 (WLIL…FAEV), 247 to 267 (MAEY…FFGG), 283 to 303 (SWPL…FIWV), 322 to 342 (LTLP…AFVP), and 353 to 373 (WLLG…SDAV).

Belongs to the complex I subunit 1 family. As to quaternary structure, NDH-1 is composed of 15 different subunits. Subunits NuoA, H, J, K, L, M, N constitute the membrane sector of the complex.

It localises to the cell membrane. The enzyme catalyses a quinone + NADH + 5 H(+)(in) = a quinol + NAD(+) + 4 H(+)(out). In terms of biological role, NDH-1 shuttles electrons from NADH, via FMN and iron-sulfur (Fe-S) centers, to quinones in the respiratory chain. The immediate electron acceptor for the enzyme in this species is believed to be ubiquinone. Couples the redox reaction to proton translocation (for every two electrons transferred, four hydrogen ions are translocated across the cytoplasmic membrane), and thus conserves the redox energy in a proton gradient. This subunit may bind ubiquinone. The protein is NADH-quinone oxidoreductase subunit H of Deinococcus radiodurans (strain ATCC 13939 / DSM 20539 / JCM 16871 / CCUG 27074 / LMG 4051 / NBRC 15346 / NCIMB 9279 / VKM B-1422 / R1).